The following is a 179-amino-acid chain: MSRIGKLPIKLPPGIKVSIEGNNVTLEGKKGKLFHRLPEFLKVHQQDGSLILENTADSRQSKAMYGLHRSLLNNAVMGVHEGFQKKLEINGIGFRAAVEGKKLVMNLGFSHPVVYEIPEGISVKVQDNTKLTIEGIDKCLVGAVAADIRGFYVPEPYKGKGIRYAGEVIRRKAGKTAQK.

The protein belongs to the universal ribosomal protein uL6 family. In terms of assembly, part of the 50S ribosomal subunit.

Its function is as follows. This protein binds to the 23S rRNA, and is important in its secondary structure. It is located near the subunit interface in the base of the L7/L12 stalk, and near the tRNA binding site of the peptidyltransferase center. The sequence is that of Large ribosomal subunit protein uL6 from Methylacidiphilum infernorum (isolate V4) (Methylokorus infernorum (strain V4)).